We begin with the raw amino-acid sequence, 472 residues long: Methylenetetrahydrofolate--tRNA-(uracil-5-)-methyltransferase TrmFO (472 aa).

Position 15–20 (15–20 (GGGLAG)) interacts with FAD.

It belongs to the MnmG family. TrmFO subfamily. FAD serves as cofactor.

It is found in the cytoplasm. It carries out the reaction uridine(54) in tRNA + (6R)-5,10-methylene-5,6,7,8-tetrahydrofolate + NADH + H(+) = 5-methyluridine(54) in tRNA + (6S)-5,6,7,8-tetrahydrofolate + NAD(+). It catalyses the reaction uridine(54) in tRNA + (6R)-5,10-methylene-5,6,7,8-tetrahydrofolate + NADPH + H(+) = 5-methyluridine(54) in tRNA + (6S)-5,6,7,8-tetrahydrofolate + NADP(+). Functionally, catalyzes the folate-dependent formation of 5-methyl-uridine at position 54 (M-5-U54) in all tRNAs. This Rhizobium meliloti (strain 1021) (Ensifer meliloti) protein is Methylenetetrahydrofolate--tRNA-(uracil-5-)-methyltransferase TrmFO.